Reading from the N-terminus, the 1134-residue chain is Nck-associated protein 1-like (1134 aa).

The tract at residues 638–671 (KAKNKKSMKQRQAPRKGEPERDKPGAESHRKNRS) is disordered. The span at 639–651 (AKNKKSMKQRQAP) shows a compositional bias: basic residues. Over residues 652–666 (RKGEPERDKPGAESH) the composition is skewed to basic and acidic residues. Residues 999–1019 (LLLIFLAVSLPLLATDPSSFF) form a helical membrane-spanning segment.

In hematopoietic cells, component of the WAVE2 complex composed of ABI1, CYFIP1/SRA1, NCKAP1L/HEM1 and WASF2/WAVE2. Interacts with ARHGAP4, PIK3C3/VPS34 and PPP1R12A/MYPT1. Interacts with mammalian target of rapamycin complex 2 (mTORC2) components, including MTOR and RICTOR. In terms of tissue distribution, predominantly expressed in developing and mature hematopoietic cells. Also detected in urogenital tissues, including testis.

It localises to the membrane. Its subcellular location is the cytoplasm. Its function is as follows. Essential hematopoietic-specific regulator of the actin cytoskeleton. Controls lymphocyte development, activation, proliferation and homeostasis, erythrocyte membrane stability, as well as phagocytosis and migration by neutrophils and macrophages. Component of the WAVE2 complex which signals downstream of RAC to stimulate F-actin polymerization. Required for stabilization and/or translation of the WAVE2 complex proteins in hematopoietic cells. Within the WAVE2 complex, enables the cortical actin network to restrain excessive degranulation and granule release by T-cells. Required for efficient T-lymphocyte and neutrophil migration. Exhibits complex cycles of activation and inhibition to generate waves of propagating the assembly with actin. Also involved in mechanisms WAVE independent to regulate myosin and actin polymerization during neutrophil chemotaxis. In T-cells, required for proper mechanistic target of rapamycin complex 2 (mTORC2)-dependent AKT phosphorylation, cell proliferation and cytokine secretion, including that of IL2 and TNF. This Mus musculus (Mouse) protein is Nck-associated protein 1-like.